The following is a 138-amino-acid chain: Small ribosomal subunit protein uS9c (138 aa).

It belongs to the universal ribosomal protein uS9 family.

It is found in the plastid. The protein localises to the chloroplast. In Phaeodactylum tricornutum (strain CCAP 1055/1), this protein is Small ribosomal subunit protein uS9c (rps9).